The following is a 761-amino-acid chain: Xaa-Pro dipeptidyl-peptidase (761 aa).

Residues Ser-347, Asp-467, and His-497 each act as charge relay system in the active site.

The protein belongs to the peptidase S15 family. In terms of assembly, homodimer.

The protein resides in the cytoplasm. The enzyme catalyses Hydrolyzes Xaa-Pro-|- bonds to release unblocked, N-terminal dipeptides from substrates including Ala-Pro-|-p-nitroanilide and (sequentially) Tyr-Pro-|-Phe-Pro-|-Gly-Pro-|-Ile.. In terms of biological role, removes N-terminal dipeptides sequentially from polypeptides having unsubstituted N-termini provided that the penultimate residue is proline. The protein is Xaa-Pro dipeptidyl-peptidase of Streptococcus agalactiae serotype III (strain NEM316).